The chain runs to 125 residues: MPKTQRGIYHNLKESKYVASNNDVTFFFSSELYLNKFLDGYQEYRKKFNKKIERVAVTPWNMDMLADITFYSEVEKRGFHAWLKGDNATWREVHVYALRIMTKPSTLDWSRIQKPKLRERRKSMV.

The segment at residues 77–96 (RGFHAWLKGDNATWREVHVY) is a DNA-binding region (H-T-H motif).

It belongs to the phi29likevirus late genes activator p4 family. As to quaternary structure, interacts with host RNA polymerase (via C-terminus). Interacts with DNA; binds to the A2b, A2c and A3 promoters.

In terms of biological role, mediates, together with protein p6, the early to late transcriptional switch by stabilizing the binding of host RNA polymerase (RNAP) to the late A3 promoter. Activates transcription from the late A3 promoter and represses the main early promoters A2b and A2c by modifying the topology of the sequences encompassing early promoters A2c and A2b and late promoter A3 in a hairpin. Binds to a region of the A3 promoter located between nucleotides -50 and -100 relative to the transcription start site, that presents a sequence-directed curvature. Full induction of this curvature is needed for the transcription activation process. The sequence is that of Late genes activator p4 (4) from Bacillus phage PZA (Bacteriophage PZA).